The following is a 359-amino-acid chain: tRNA-specific 2-thiouridylase MnmA (359 aa).

Residues 9–16 (GISGGVDS) and methionine 35 contribute to the ATP site. The tract at residues 95-97 (NPD) is interaction with target base in tRNA. The Nucleophile role is filled by cysteine 100. A disulfide bridge connects residues cysteine 100 and cysteine 197. Glycine 124 serves as a coordination point for ATP. The interval 147-149 (KDQ) is interaction with tRNA. Cysteine 197 serves as the catalytic Cysteine persulfide intermediate. Residues 309–310 (RY) are interaction with tRNA.

The protein belongs to the MnmA/TRMU family.

Its subcellular location is the cytoplasm. It catalyses the reaction S-sulfanyl-L-cysteinyl-[protein] + uridine(34) in tRNA + AH2 + ATP = 2-thiouridine(34) in tRNA + L-cysteinyl-[protein] + A + AMP + diphosphate + H(+). Its function is as follows. Catalyzes the 2-thiolation of uridine at the wobble position (U34) of tRNA, leading to the formation of s(2)U34. This is tRNA-specific 2-thiouridylase MnmA from Francisella philomiragia subsp. philomiragia (strain ATCC 25017 / CCUG 19701 / FSC 153 / O#319-036).